The chain runs to 490 residues: MSLSSLTLDSNPRFAVGGPYHRRYPPLHHPRSFVSCSAKRPAVSASLSVAADSAATESLGRIGSLSQVSGVLGCQWGDEGKGKLVDILAQHFDIVARCQGGANAGHTIYNSEGKKFALHLVPSGILNEDTTCVIGNGVVVHLPGLFKEIDGLESNGVSCKGRILVSDRAHLLFDFHQEVDGLRESELAKSFIGTTKRGIGPAYSSKVIRNGIRVGDLRHMDTLPQKLDLLLSDAAARFQGFKYTPEMLREEVEAYKRYADRLEPYITDTVHFINDSISQKKKVLVEGGQATMLDIDFGTYPFVTSSSPSAGGICTGLGIAPSVVGDLIGVVKAYTTRVGSGPFPTENLGTGGDLLRLAGQEFGTTTGRPRRCGWLDIVALKFSCQINGFASLNLTKLDVLSDLNEIQLGVAYKRSDGTPVKSFPGDLRLLEELHVEYEVLPGWKSDISSVRNYSDLPKAAQQYVERIEELVGVPIHYIGIGPGRDALIYK.

A chloroplast-targeting transit peptide spans 1–45 (MSLSSLTLDSNPRFAVGGPYHRRYPPLHHPRSFVSCSAKRPAVSA). Position 46 is an N-acetylserine (Ser46). GTP-binding positions include 77–83 (GDEGKGK) and 105–107 (GHT). Residue Asp78 is the Proton acceptor of the active site. 2 residues coordinate Mg(2+): Asp78 and Gly105. Residues 78–81 (DEGK), 103–106 (NAGH), Thr195, Arg209, Gln289, Thr304, and Arg368 each bind IMP. His106 functions as the Proton donor in the catalytic mechanism. 364-370 (TTTGRPR) is a binding site for substrate. Residues Arg370, 396 to 398 (KLD), and 479 to 481 (GIG) contribute to the GTP site.

The protein belongs to the adenylosuccinate synthetase family. Homodimer. The cofactor is Mg(2+).

Its subcellular location is the plastid. It localises to the chloroplast. It carries out the reaction IMP + L-aspartate + GTP = N(6)-(1,2-dicarboxyethyl)-AMP + GDP + phosphate + 2 H(+). It functions in the pathway purine metabolism; AMP biosynthesis via de novo pathway; AMP from IMP: step 1/2. Functionally, plays an important role in the de novo pathway and in the salvage pathway of purine nucleotide biosynthesis. Catalyzes the first committed step in the biosynthesis of AMP from IMP. This is Adenylosuccinate synthetase, chloroplastic from Arabidopsis thaliana (Mouse-ear cress).